The following is a 103-amino-acid chain: UPF0145 protein PTH_2690 (103 aa).

The protein belongs to the UPF0145 family.

The chain is UPF0145 protein PTH_2690 from Pelotomaculum thermopropionicum (strain DSM 13744 / JCM 10971 / SI).